The chain runs to 135 residues: Transcriptional activator protein (135 aa).

The Nuclear localization signal signature appears at 17–32 (KVQHKIAKKKPIRRKR). Residues 37 to 54 (CGCSYYLHLNCNNHGFTH) fold into a zinc finger. 2 stretches are compositionally biased toward polar residues: residues 77–87 (LFQDNRTQPEA) and 101–115 (IQPQ…SQMF). Residues 77–117 (LFQDNRTQPEAISNEPRHHFHSDKIQPQHQEGNGDSQMFSR) form a disordered region. A transactivation region spans residues 120 to 135 (NLDDITASDWSFLKSI).

It belongs to the geminiviridae transcriptional activator protein family. In terms of assembly, monomer. Homodimer. Homooligomer. Self-interaction correlates with nuclear localization and efficient activation of transcription. Monomers suppress local silencing by interacting with and inactivating host adenosine kinase 2 (ADK2) in the cytoplasm. Interacts with and inhibits host SNF1 kinase. Binds to ssDNA. May interact with host RPS27A. In terms of processing, phosphorylated.

It localises to the host nucleus. The protein localises to the host cytoplasm. Functionally, multifunctional protein that modulates host antiviral defenses and promotes host attractiveness to insect vectors. Acts as a suppressor of RNA-mediated gene silencing, also known as post-transcriptional gene silencing (PTGS), a mechanism of plant viral defense that limits the accumulation of viral RNAs. TrAP suppresses the host RNA silencing by inhibiting adenosine kinase 2 (ADK2), a kinase involved in a general methylation pathway. Also suppresses the host basal defense by interacting with and inhibiting SNF1 kinase, a key regulator of cell metabolism implicated in innate antiviral defense. Inhibits signal transduction by the phytohormone jasmonate, making the infected plant more attractive to aphids, which are the second host to play a role as a dissemination vector. Acts by binding to ubiquitin precursor RPS27A, thereby preventing ubiquitin degradation of JAZ. This Tomato yellow leaf curl virus (strain Israel) (TYLCV) protein is Transcriptional activator protein.